The sequence spans 263 residues: P29 (263 aa).

Residues V30–K39 show a composition bias toward basic and acidic residues. A disordered region spans residues V30–I93. Over residues L52 to P64 the composition is skewed to polar residues.

This chain is P29 (p29), found in Citrus sinensis (Sweet orange).